We begin with the raw amino-acid sequence, 485 residues long: Glutamate--tRNA ligase (485 aa).

A 'HIGH' region motif is present at residues 11-21 (PSPTGLLHIGN). A 'KMSKS' region motif is present at residues 255 to 259 (KLSKR). Lys-258 contributes to the ATP binding site.

The protein belongs to the class-I aminoacyl-tRNA synthetase family. Glutamate--tRNA ligase type 1 subfamily. In terms of assembly, monomer.

It localises to the cytoplasm. It carries out the reaction tRNA(Glu) + L-glutamate + ATP = L-glutamyl-tRNA(Glu) + AMP + diphosphate. In terms of biological role, catalyzes the attachment of glutamate to tRNA(Glu) in a two-step reaction: glutamate is first activated by ATP to form Glu-AMP and then transferred to the acceptor end of tRNA(Glu). In Streptococcus mutans serotype c (strain ATCC 700610 / UA159), this protein is Glutamate--tRNA ligase.